The sequence spans 421 residues: Forkhead box protein fkh-4 (421 aa).

Residues 118 to 218 (RPPISYVALC…SDADFDFFRK (101 aa)) constitute a DNA-binding region (fork-head).

The protein resides in the nucleus. Its function is as follows. Transcription factor. Regulates expression of a class of small RNAs, known as 21U-RNAs, perhaps acting redundantly with fkh-3 and fkh-5. The chain is Forkhead box protein fkh-4 from Caenorhabditis elegans.